Reading from the N-terminus, the 229-residue chain is MAAAQPESRDGAAQSAKPASETDPLSRFTCPVCLEVFEKPVQVPCGHVFCSACLQECLKPKKPVCGVCRSALAPGVRAVELERQIESIETSCHGCRKNFILSKIRAHVTSCSKYQNYIMEGVKATTKDASLQPRNIPNRYTFPCPYCPEKNFDQEGLVEHCKLTHSTDTKSVVCPICASMPWGDPSYRSANFMEHIQRRHRFSYDTFVDYDVDEDDMINQVLQRSIIDQ.

The disordered stretch occupies residues 1-23 (MAAAQPESRDGAAQSAKPASETD). The RING-type zinc-finger motif lies at 30–69 (CPVCLEVFEKPVQVPCGHVFCSACLQECLKPKKPVCGVCR). Residues Cys92 and Cys95 each coordinate Zn(2+). The C2HC RNF-type zinc finger occupies 92 to 111 (CHGCRKNFILSKIRAHVTSC). Lys103 carries the N6-acetyllysine modification. His107 and Cys111 together coordinate Zn(2+). The residue at position 113 (Lys113) is an N6-acetyllysine.

Interacts with XAF1, the interaction increases XAF1 stability and proapoptotic effects, and may regulate IFN signaling. In terms of processing, autoubiquitinated. Polyubiquitinated in the presence of E2 enzymes UBE2D1, UBE2D2 and UBE2D3, but only monoubiquitinated in the presence of UBE2E1.

It localises to the cytoplasm. It is found in the nucleus. It carries out the reaction S-ubiquitinyl-[E2 ubiquitin-conjugating enzyme]-L-cysteine + [acceptor protein]-L-lysine = [E2 ubiquitin-conjugating enzyme]-L-cysteine + N(6)-ubiquitinyl-[acceptor protein]-L-lysine.. The protein operates within protein modification; protein ubiquitination. In terms of biological role, E3 ubiquitin-protein ligase that promotes the ubiquitination of various substrates. In turn, participates in the regulation of many biological processes including cell cycle, apoptosis, osteoclastogenesis as well as innate or adaptive immunity. Acts as negative regulator of NF-kappa-B-dependent transcription by promoting the ubiquitination and stabilization of the NF-kappa-B inhibitor TNFAIP3. May promote the ubiquitination of TRAF6 as well. Also acts as a negative regulator of T-cell activation. Inhibits cellular dsRNA responses and interferon production by targeting MAVS component for proteasomal degradation. Ubiquitinates the CDK inhibitor CDKN1A leading to its degradationand probably also CDKN1B and CDKN1C. This activity stimulates cell cycle G1-to-S phase transition and suppresses cellular senescence. May play a role in spermatogenesis. This chain is E3 ubiquitin-protein ligase RNF114 (Rnf114), found in Mus musculus (Mouse).